The following is an 846-amino-acid chain: Matrin-3 (846 aa).

At Ser-2 the chain carries N-acetylserine. N6-acetyllysine; alternate is present on Lys-3. Residue Lys-3 forms a Glycyl lysine isopeptide (Lys-Gly) (interchain with G-Cter in SUMO2); alternate linkage. Ser-4, Ser-9, Ser-14, Ser-22, Ser-41, Ser-118, and Ser-126 each carry phosphoserine. Glycyl lysine isopeptide (Lys-Gly) (interchain with G-Cter in SUMO2) cross-links involve residues Lys-132 and Lys-146. 2 disordered regions span residues 147 to 174 (RRRT…YRVP) and 187 to 213 (DSFD…ESGY). A Phosphothreonine modification is found at Thr-150. Residue Ser-157 is modified to Phosphoserine. The residue at position 158 (Tyr-158) is a Phosphotyrosine. The span at 160–174 (RDGRSATREPPYRVP) shows a compositional bias: basic and acidic residues. Phosphoserine is present on residues Ser-164, Ser-188, and Ser-195. Positions 201–213 (DYDHGSRSQESGY) are enriched in basic and acidic residues. A Phosphotyrosine modification is found at Tyr-202. Residues Ser-206, Ser-208, and Ser-211 each carry the phosphoserine modification. The residue at position 219 (Tyr-219) is a Phosphotyrosine. Phosphoserine is present on Ser-234. A Glycyl lysine isopeptide (Lys-Gly) (interchain with G-Cter in SUMO2) cross-link involves residue Lys-245. Ser-264 is subject to Phosphoserine. Lys-269 is covalently cross-linked (Glycyl lysine isopeptide (Lys-Gly) (interchain with G-Cter in SUMO2)). Ser-275 is subject to Phosphoserine. The tract at residues 342 to 394 (PFMLQQSTNPAPGILGPPPPSFHLGGPAVGPRGNLGAGNGNLQGPRHMQKGRV) is disordered. One can recognise an RRM 1 domain in the interval 398–473 (RVVHIMDFQR…KPVRVHLSQK (76 aa)). Residues Lys-478, Lys-487, and Lys-491 each participate in a glycyl lysine isopeptide (Lys-Gly) (interchain with G-Cter in SUMO2) cross-link. The region spanning 496-571 (RVIHLSNLPH…RCVKVDLSEK (76 aa)) is the RRM 2 domain. Phosphoserine occurs at positions 509 and 511. Residue Lys-515 forms a Glycyl lysine isopeptide (Lys-Gly) (interchain with G-Cter in SUMO2) linkage. Lys-522 is subject to N6-acetyllysine; alternate. Residue Lys-522 forms a Glycyl lysine isopeptide (Lys-Gly) (interchain with G-Cter in SUMO2); alternate linkage. Ser-533 carries the phosphoserine modification. Glycyl lysine isopeptide (Lys-Gly) (interchain with G-Cter in SUMO2) cross-links involve residues Lys-554 and Lys-555. Lys-571 is subject to N6-acetyllysine. A disordered region spans residues 588 to 779 (KKDKSRKRSY…EDYTIPDEYR (192 aa)). Residues Ser-596, Ser-598, Ser-604, and Ser-606 each carry the phosphoserine modification. Over residues 600–642 (DGKESPSDKKSKTDAQKTESPAEGKEQEEKSGEDGEKDTKDDQ) the composition is skewed to basic and acidic residues. Glycyl lysine isopeptide (Lys-Gly) (interchain with G-Cter in SUMO2) cross-links involve residues Lys-616 and Lys-629. Over residues 652 to 664 (ESEDELLVDEEEA) the composition is skewed to acidic residues. Ser-653, Ser-670, Ser-672, and Ser-673 each carry phosphoserine. Over residues 665 to 675 (AALLESGSSVG) the composition is skewed to low complexity. Phosphothreonine is present on Thr-678. Ser-688 bears the Phosphoserine mark. Positions 688 to 703 (SDGKKEPSDKAVKKDP) are enriched in basic and acidic residues. A Nuclear localization signal motif is present at residues 709–717 (SKKKLKKVD). Residues Lys-718 and Lys-735 each participate in a glycyl lysine isopeptide (Lys-Gly) (interchain with G-Cter in SUMO2) cross-link. Thr-740 carries the post-translational modification Phosphothreonine. Phosphoserine is present on residues Ser-746 and Ser-758. Positions 766–779 (DENKEDYTIPDEYR) are enriched in basic and acidic residues. Lys-769 participates in a covalent cross-link: Glycyl lysine isopeptide (Lys-Gly) (interchain with G-Cter in SUMO2). A Matrin-type zinc finger spans residues 800 to 831 (FYCKLCSLFYTNEEVAKNTHCSSLPHYQKLKK). Lys-835 is modified (N6-acetyllysine; alternate). A Glycyl lysine isopeptide (Lys-Gly) (interchain with G-Cter in SUMO2); alternate cross-link involves residue Lys-835.

In terms of assembly, part of a complex consisting of SFPQ, NONO and MATR3. Interacts with AGO1 and AGO2. Part of a complex composed at least of ASH2L, EMSY, HCFC1, HSPA8, CCAR2, MATR3, MKI67, RBBP5, TUBB2A, WDR5 and ZNF335; this complex may have a histone H3-specific methyltransferase activity. Interacts with TARDBP. Part of the HDP-RNP complex composed of at least HEXIM1, PRKDC, XRCC5, XRCC6, paraspeckle proteins (SFPQ, NONO, PSPC1, RBM14, and MATR3) and NEAT1 RNA. Interacts with FUS. Interacts with IGF2BP1. Interacts with IGF2BP2 and IGF2BP3. Interacts with RBPMS.

The protein resides in the nucleus matrix. Functionally, may play a role in transcription or may interact with other nuclear matrix proteins to form the internal fibrogranular network. In association with the SFPQ-NONO heteromer may play a role in nuclear retention of defective RNAs. Plays a role in the regulation of DNA virus-mediated innate immune response by assembling into the HDP-RNP complex, a complex that serves as a platform for IRF3 phosphorylation and subsequent innate immune response activation through the cGAS-STING pathway. Binds to N6-methyladenosine (m6A)-containing mRNAs and contributes to MYC stability by binding to m6A-containing MYC mRNAs. May bind to specific miRNA hairpins. The polypeptide is Matrin-3 (Matr3) (Mus musculus (Mouse)).